The sequence spans 467 residues: Na(+)/H(+) exchange regulatory cofactor-like protein nrfl-1 (467 aa).

2 PDZ domains span residues 12-94 (RLCV…ISEE) and 143-225 (LAEL…ASED). The interval 344-429 (MSSHTEVLPP…ASSTSGYDDD (86 aa)) is disordered. Residues 407–425 (PSPLSNGSSHGYAASSTSG) show a composition bias toward polar residues.

As to quaternary structure, interacts (via PDZ 2 domain) with aat-6 (via PDZ-binding motif); the interaction sequesters aat-6 to the apical cell membrane of intestinal cells. Phosphorylated. As to expression, expressed in the excretory canal and intestine. Expressed on the apical cell membrane of intestinal cells (at protein level).

The protein localises to the cell projection. The protein resides in the microvillus membrane. Its subcellular location is the apical cell membrane. Scaffold protein that connects plasma membrane proteins with members of the ezrin/moesin/radixin family and thereby helps to link them to the actin cytoskeleton and to regulate their surface expression. Anchors the amino acid transporter protein aat-6 to the apical cell membrane of intestinal cells, particularly in older animals, in order to maintain amino acid homeostasis. May play a role in promoting fertility. The chain is Na(+)/H(+) exchange regulatory cofactor-like protein nrfl-1 from Caenorhabditis elegans.